The primary structure comprises 279 residues: Shikimate dehydrogenase (NADP(+)) (279 aa).

Shikimate contacts are provided by residues 19–21 (SRS) and threonine 66. The active-site Proton acceptor is the lysine 70. 2 residues coordinate shikimate: asparagine 91 and aspartate 106. Residues 129–133 (GAGGA), 152–157 (NRTLER), and isoleucine 218 contribute to the NADP(+) site. Tyrosine 220 provides a ligand contact to shikimate. Residue glycine 241 coordinates NADP(+).

This sequence belongs to the shikimate dehydrogenase family. Homodimer.

It catalyses the reaction shikimate + NADP(+) = 3-dehydroshikimate + NADPH + H(+). The protein operates within metabolic intermediate biosynthesis; chorismate biosynthesis; chorismate from D-erythrose 4-phosphate and phosphoenolpyruvate: step 4/7. Involved in the biosynthesis of the chorismate, which leads to the biosynthesis of aromatic amino acids. Catalyzes the reversible NADPH linked reduction of 3-dehydroshikimate (DHSA) to yield shikimate (SA). The chain is Shikimate dehydrogenase (NADP(+)) from Gluconobacter oxydans (strain 621H) (Gluconobacter suboxydans).